Consider the following 429-residue polypeptide: Bifunctional protein GlmU (429 aa).

Positions 1 to 223 are pyrophosphorylase; the sequence is MKTSILILAA…EDEFMGINDK (223 aa). UDP-N-acetyl-alpha-D-glucosamine contacts are provided by residues 8–11, lysine 22, and 81–82; these read LAAG and GT. Residue aspartate 102 coordinates Mg(2+). UDP-N-acetyl-alpha-D-glucosamine-binding residues include glycine 135, glutamate 149, asparagine 164, and asparagine 221. Asparagine 221 provides a ligand contact to Mg(2+). Residues 224–244 form a linker region; the sequence is FELSIAENFMQEKIKKYWMQQ. The segment at 245–429 is N-acetyltransferase; the sequence is GVIFHLPQST…KDYYYKKFQK (185 aa). UDP-N-acetyl-alpha-D-glucosamine is bound by residues arginine 308 and lysine 325. Histidine 336 functions as the Proton acceptor in the catalytic mechanism. The UDP-N-acetyl-alpha-D-glucosamine site is built by tyrosine 339 and asparagine 350. Acetyl-CoA-binding positions include 359–360, serine 378, alanine 396, and arginine 413; that span reads NY.

In the N-terminal section; belongs to the N-acetylglucosamine-1-phosphate uridyltransferase family. This sequence in the C-terminal section; belongs to the transferase hexapeptide repeat family. Homotrimer. Mg(2+) serves as cofactor.

It is found in the cytoplasm. It catalyses the reaction alpha-D-glucosamine 1-phosphate + acetyl-CoA = N-acetyl-alpha-D-glucosamine 1-phosphate + CoA + H(+). The enzyme catalyses N-acetyl-alpha-D-glucosamine 1-phosphate + UTP + H(+) = UDP-N-acetyl-alpha-D-glucosamine + diphosphate. The protein operates within nucleotide-sugar biosynthesis; UDP-N-acetyl-alpha-D-glucosamine biosynthesis; N-acetyl-alpha-D-glucosamine 1-phosphate from alpha-D-glucosamine 6-phosphate (route II): step 2/2. It functions in the pathway nucleotide-sugar biosynthesis; UDP-N-acetyl-alpha-D-glucosamine biosynthesis; UDP-N-acetyl-alpha-D-glucosamine from N-acetyl-alpha-D-glucosamine 1-phosphate: step 1/1. It participates in bacterial outer membrane biogenesis; LPS lipid A biosynthesis. Catalyzes the last two sequential reactions in the de novo biosynthetic pathway for UDP-N-acetylglucosamine (UDP-GlcNAc). The C-terminal domain catalyzes the transfer of acetyl group from acetyl coenzyme A to glucosamine-1-phosphate (GlcN-1-P) to produce N-acetylglucosamine-1-phosphate (GlcNAc-1-P), which is converted into UDP-GlcNAc by the transfer of uridine 5-monophosphate (from uridine 5-triphosphate), a reaction catalyzed by the N-terminal domain. The protein is Bifunctional protein GlmU of Campylobacter jejuni subsp. jejuni serotype O:23/36 (strain 81-176).